The sequence spans 164 residues: B-phycoerythrin alpha chain (164 aa).

2 residues coordinate (2R,3E)-phycoerythrobilin: Cys-82 and Cys-139.

Belongs to the phycobiliprotein family. In terms of assembly, heteromer of 6 alpha, 6 beta and one gamma chain. Contains two covalently linked bilin chromophores.

The protein localises to the plastid. Its subcellular location is the chloroplast thylakoid membrane. Its function is as follows. Light-harvesting photosynthetic bile pigment-protein from the phycobiliprotein complex. This chain is B-phycoerythrin alpha chain (cpeA), found in Porphyridium sordidum (Red alga).